A 984-amino-acid chain; its full sequence is MRTAYFIFVGALLGVSYAKHHHAARAPIINLQGAEELVAVVREDENIISTVPDFAILSETGPVCNYLLTSQNNEPVPFDIQVVDKYTGAAVLRVKDAATLDCKKPEYNLQVQAVKCDNDNVKSEGVSLKIRVKDTNNHAPEIENPWYTFHVEEGKVVEEVGVLKASDKDCGHPNGEICEYEITNGLKELPFAINNHGVLRTTQPLNFTQSKSYILTVVAIDCAMRKSKSSLVTVHVDEKCVQGITAMNERVNYAPGVGSKLLLPDVSLEFCEKETICEPKSVQSVIELRAGHVTQGCARDTVYDNQTIQSCGLSTATVKLLNEEALTSSAENQILADQGIEFDGARGVTVSDENHQGLIPDHFTLSFSMKHAAGTKDEQSNKQNILCESDDFNMNRHHFSVYIRHCKLEVVLRREAGATSDFRAAEWRWSMPEVCDNEWHSYSLLFNGIDDVNVIVDGKSFKADERNPEILDDWPLHKTKATKTKLVVGACWHGRQQKLAQFFRGQLSSLYLLSGAVESERAIKCAHTCPEQLQFTGVDELLESQSATFSPDQTSLTLKAETSKQIGQMLKRVAYVNTQEKPAPGHRVFLVETEVTCKQDDKKMKLPSSKGYVFVQQAAEPTLSISASSQLKSNQHMVKVGQAMVPDLTITISQNNADGELEDVTQSHKIDYCKMHLQPARDMDVEYFSSPASLIAALNIEFEHDKDGILLRGEESAQGYKEVLSKVHYFNTRPESYAKRVYTVQCAMLKGRVLSNQLFVTMTIDGVTTTTSTTTEAPAPAQPDPIQFNFNSGETALDSLELIERHFEPAFDQLGSSRLQNILEMDLPRPKALLSHHGYDVGQGAIAGGAVAVVVVVCVGFLLVLLVIGVLKMRDTPMPRRRRQKRQSDGGMHWDDSGMNITVNPLDDVEKNGGAIDEFSDEEEEEETDGESECSYRDEEDDVSEDEEDQTEVLPHLDANQRVVGGLEWDDEDAISTNARSYRV.

The N-terminal stretch at 1-18 (MRTAYFIFVGALLGVSYA) is a signal peptide. Over 19–850 (KHHHAARAPI…VGQGAIAGGA (832 aa)) the chain is Extracellular. 2 Cadherin domains span residues 66–142 (YLLT…APEI) and 143–257 (ENPW…APGV). N-linked (GlcNAc...) asparagine glycans are attached at residues Asn-206 and Asn-305. The chain crosses the membrane as a helical span at residues 851–871 (VAVVVVVCVGFLLVLLVIGVL). Residues 872–984 (KMRDTPMPRR…ISTNARSYRV (113 aa)) are Cytoplasmic-facing. Residues 878 to 959 (MPRRRRQKRQ…QTEVLPHLDA (82 aa)) form a disordered region. A compositionally biased stretch (basic and acidic residues) spans 886 to 896 (RQSDGGMHWDD). Acidic residues predominate over residues 918 to 951 (EFSDEEEEEETDGESECSYRDEEDDVSEDEEDQT).

Belongs to the calsyntenin family. Interacts with isoform c of daf-2 (daf-2c); promoting daf-2c localization to synaptic regions. Interacts with klc-2. Interacts with unc-104. Post-translationally, a proportion of the protein is proteolytically cleaved before the transmembrane domain in neurons, leading to release in the extracellular space. In terms of tissue distribution, widely expressed in the nervous system. Highly expressed in many head neurons, including most amphid sensory neurons. Also expressed in other tissues, such as intestine and gonadal sheath cells.

The protein resides in the golgi apparatus membrane. Its subcellular location is the perikaryon. The protein localises to the cell projection. It localises to the axon. It is found in the secreted. The protein resides in the synaptic cleft. In terms of biological role, cell adhesion molecule involved in associative learning and memory. Acts as a regulator of GABAergic synaptic transmission at neuromuscular junctions by regulating GABA synaptic vesicle precursor transport: possibly functions as a cargo adapter for unc-104-mediated transport of synaptic vesicle precursors. Promotes localization of isoform c of daf-2 (daf-2c) to synaptic regions by acting as a signaling adapter between klc-2 and daf-2c. Functionally, acts as aregulator of glutamate signaling in the sensory neurons by inhibiting the activity of command interneurons, thereby negatively regulating motor circuit activity and locomotion. This chain is Calsyntenin-1, found in Caenorhabditis elegans.